The following is a 123-amino-acid chain: Large ribosomal subunit protein bL12 (123 aa).

It belongs to the bacterial ribosomal protein bL12 family. Homodimer. Part of the ribosomal stalk of the 50S ribosomal subunit. Forms a multimeric L10(L12)X complex, where L10 forms an elongated spine to which 2 to 4 L12 dimers bind in a sequential fashion. Binds GTP-bound translation factors.

Forms part of the ribosomal stalk which helps the ribosome interact with GTP-bound translation factors. Is thus essential for accurate translation. This is Large ribosomal subunit protein bL12 from Maricaulis maris (strain MCS10) (Caulobacter maris).